Here is a 190-residue protein sequence, read N- to C-terminus: Elongation factor P-like protein (190 aa).

The protein belongs to the elongation factor P family.

This is Elongation factor P-like protein from Erwinia tasmaniensis (strain DSM 17950 / CFBP 7177 / CIP 109463 / NCPPB 4357 / Et1/99).